A 637-amino-acid chain; its full sequence is Sphingomyelin phosphodiesterase B (637 aa).

The signal sequence occupies residues 1–20 (MKVKAPILLLFVFLINFCFS). An N-linked (GlcNAc...) asparagine glycan is attached at N73. The Saposin B-type domain maps to 73–155 (NGTKCDICKF…GFVGFCPYVP (83 aa)). 3 disulfide bridges follow: C77–C151, C80–C145, and C108–C119. N128 and N157 each carry an N-linked (GlcNAc...) asparagine glycan. 2 residues coordinate Zn(2+): D191 and H193. C212 and C233 are joined by a disulfide. D263 is a binding site for Zn(2+). N-linked (GlcNAc...) asparagine glycosylation occurs at N279. N304 contributes to the Zn(2+) binding site. N377 carries N-linked (GlcNAc...) asparagine glycosylation. Zn(2+) is bound by residues H407, H441, and H443. 2 N-linked (GlcNAc...) asparagine glycosylation sites follow: N523 and N546. Residues C582 and C595 are joined by a disulfide bond. N606 carries an N-linked (GlcNAc...) asparagine glycan.

It belongs to the acid sphingomyelinase family. Zn(2+) is required as a cofactor.

Its subcellular location is the secreted. In terms of biological role, converts sphingomyelin to ceramide. The sequence is that of Sphingomyelin phosphodiesterase B (sgmB) from Dictyostelium discoideum (Social amoeba).